The sequence spans 382 residues: U11/U12 small nuclear ribonucleoprotein 59 kDa protein (382 aa).

The stretch at 31 to 63 (NTKNITDQLKQLQDTLNLAKSMEKELEALKMIK) forms a coiled coil. The disordered stretch occupies residues 274 to 297 (SEENTTLTTSNKTNNDTDKDSNTN). The segment covering 277–287 (NTTLTTSNKTN) has biased composition (low complexity).

In terms of assembly, component of the U11/U12 snRNPs that are part of the U12-type spliceosome.

It localises to the nucleus. This is U11/U12 small nuclear ribonucleoprotein 59 kDa protein (SNRNP59) from Arabidopsis thaliana (Mouse-ear cress).